The chain runs to 261 residues: Methyltransferase nsrG (261 aa).

The interval 49–141 (DVGAGNGPYA…AHQLRPGALF (93 aa)) is methyltransferase domain.

The protein belongs to the methyltransferase superfamily.

It functions in the pathway secondary metabolite biosynthesis. In terms of biological role, methyltransferase; part of the gene cluster that mediates the biosynthesis of the tetrahydroxanthone dimer neosartorin, which exhibits antibacterial activity. The two different monomeric units appear to be synthesized by the same set of enzymes, among which the Baeyer-Villiger monooxygenase nsrF is the key enzyme for the divergence of the biosynthetic routes. The pathway begins with the synthesis of atrochrysone thioester by the polyketide synthase nsrB. The atrochrysone carboxyl ACP thioesterase nsrC then breaks the thioester bond and releases the atrochrysone carboxylic acid from AacuL. Atrochrysone carboxylic acid is decarboxylated by the decarboxylase nsrE, and oxidized by the anthrone oxygenase nsrD to yield emodin. Emodin is then reduced to emodin hydroquinone by the oxidoreductase nsrR. A-ring reduction by the short chain dehydrogenase nsrJ, dehydration by the scytalone dehydratase-like protein nsrI and probable spontaneous re-oxidation, results in overall deoxygenation to chrysophanol. The Baeyer-Villiger monooxygenase nsrF accepts chrysophanol as a substrate to insert one oxygen atom at two different positions to yield the precursors of both monomric units. NsrF is promiscuous/flexible in interacting with the 2 (non methylated and methylated) aromatic rings of chrysophanol, thus diverging the biosynthetic pathway at this point. After the hydrolysis of the lactones, methylesterification by the methyltransferase nsrG yields respectively moniliphenone and 2,2',6'-trihydroxy-4-methyl-6-methoxya-cyldiphenylmethanone. The next steps are the hydroxylation by the FAD-dependent monooxygenase nsrK, followed by isomerization by the monooxygenase nsrQ. The short chain dehydrogenase/reductase nsrO then catalyzes the C-5 ketoreduction to give the xanthone skeleton of blennolide C and 5-acetylblennolide A. The acetyltransferase nsrL has a strict substrate specificity and uses only blennolide A but not blennolide C to yield 5-acetylblennolide A as the single-acetylated product. In the final step of the biosynthesis, the heterodimerization of the 2 xanthones, blennolide C and 5-acetylblennolide A, is catalyzed by the cytochrome P450 monooxygenase nsrP. NsrP can utilize at least three different xanthones as its substrates to perform the dimerization reaction. This chain is Methyltransferase nsrG, found in Aspergillus novofumigatus (strain IBT 16806).